The following is a 285-amino-acid chain: Nurim (285 aa).

Residues 1–16 (MSANVQVSGQLSSGPS) lie on the Nuclear side of the membrane. The helical transmembrane segment at 17–44 (LPACIVLSAVSLLCFVAGFGTGAEFVRF) threads the bilayer. At 45-74 (LSFGAIFRNISGGLDGEIPLTWSEAIRNTQ) the chain is on the perinuclear space side. A helical membrane pass occupies residues 75 to 96 (FQCCIGIDIGLLFLFVLQHSLM). The Nuclear segment spans residues 97–113 (AWTAVKKNVLHVFGVLQ). The helical transmembrane segment at 114–130 (RSIYILCTALSLQVLMR) threads the bilayer. Residues 131–149 (FWQPCPHGPYLWNVSSDPW) lie on the Perinuclear space side of the membrane. The chain crosses the membrane as a helical span at residues 150–180 (SAWLPLLCALVHTISWLLIFSVLLIFDYAEL). Over 181–207 (MGIKQVYYFCLGMGDPLSHKSPRVARL) the chain is Nuclear. A helical membrane pass occupies residues 208-226 (YAHLRHPIYLELLLILWAV). Topologically, residues 227 to 232 (PCLPPD) are perinuclear space. Residues 233–250 (RLILAIFFTLYLSLVHRL) form a helical membrane-spanning segment. Residues 251 to 285 (DVQDYAYLRSQLEKKFLLFSREEASAVGGQIRKNN) lie on the Nuclear side of the membrane.

It belongs to the nurim family.

It is found in the nucleus inner membrane. The sequence is that of Nurim (nrm) from Xenopus laevis (African clawed frog).